The chain runs to 483 residues: tRNA-2-methylthio-N(6)-dimethylallyladenosine synthase (483 aa).

The MTTase N-terminal domain maps to 31-148 (KKLYIETQGC…LPQMLDQHQD (118 aa)). Residues Cys40, Cys77, Cys111, Cys192, Cys196, and Cys199 each contribute to the [4Fe-4S] cluster site. The Radical SAM core domain occupies 178 to 410 (RVEGFKAFVS…QHWIKQSSIR (233 aa)). The region spanning 413-477 (DAMQGTIQRV…LNLVYGELLN (65 aa)) is the TRAM domain.

This sequence belongs to the methylthiotransferase family. MiaB subfamily. Monomer. Requires [4Fe-4S] cluster as cofactor.

It localises to the cytoplasm. It catalyses the reaction N(6)-dimethylallyladenosine(37) in tRNA + (sulfur carrier)-SH + AH2 + 2 S-adenosyl-L-methionine = 2-methylsulfanyl-N(6)-dimethylallyladenosine(37) in tRNA + (sulfur carrier)-H + 5'-deoxyadenosine + L-methionine + A + S-adenosyl-L-homocysteine + 2 H(+). In terms of biological role, catalyzes the methylthiolation of N6-(dimethylallyl)adenosine (i(6)A), leading to the formation of 2-methylthio-N6-(dimethylallyl)adenosine (ms(2)i(6)A) at position 37 in tRNAs that read codons beginning with uridine. This is tRNA-2-methylthio-N(6)-dimethylallyladenosine synthase from Acinetobacter baylyi (strain ATCC 33305 / BD413 / ADP1).